Reading from the N-terminus, the 86-residue chain is Large ribosomal subunit protein uL23 (86 aa).

This sequence belongs to the universal ribosomal protein uL23 family. Part of the 50S ribosomal subunit. Contacts protein L29.

Its function is as follows. Binds to 23S rRNA. One of the proteins that surrounds the polypeptide exit tunnel on the outside of the ribosome. This Caldivirga maquilingensis (strain ATCC 700844 / DSM 13496 / JCM 10307 / IC-167) protein is Large ribosomal subunit protein uL23.